A 217-amino-acid polypeptide reads, in one-letter code: Imidazole glycerol phosphate synthase subunit HisH (217 aa).

Residues 3–217 (TIAIVDYGMG…IYRNFVHWKP (215 aa)) enclose the Glutamine amidotransferase type-1 domain. Cys82 (nucleophile) is an active-site residue. Catalysis depends on residues His197 and Glu199.

As to quaternary structure, heterodimer of HisH and HisF.

It localises to the cytoplasm. It carries out the reaction 5-[(5-phospho-1-deoxy-D-ribulos-1-ylimino)methylamino]-1-(5-phospho-beta-D-ribosyl)imidazole-4-carboxamide + L-glutamine = D-erythro-1-(imidazol-4-yl)glycerol 3-phosphate + 5-amino-1-(5-phospho-beta-D-ribosyl)imidazole-4-carboxamide + L-glutamate + H(+). It catalyses the reaction L-glutamine + H2O = L-glutamate + NH4(+). It functions in the pathway amino-acid biosynthesis; L-histidine biosynthesis; L-histidine from 5-phospho-alpha-D-ribose 1-diphosphate: step 5/9. Functionally, IGPS catalyzes the conversion of PRFAR and glutamine to IGP, AICAR and glutamate. The HisH subunit catalyzes the hydrolysis of glutamine to glutamate and ammonia as part of the synthesis of IGP and AICAR. The resulting ammonia molecule is channeled to the active site of HisF. The chain is Imidazole glycerol phosphate synthase subunit HisH from Ralstonia nicotianae (strain ATCC BAA-1114 / GMI1000) (Ralstonia solanacearum).